A 165-amino-acid polypeptide reads, in one-letter code: Glucosamine 6-phosphate N-acetyltransferase 1 (165 aa).

The N-acetyltransferase domain maps to 22–165 (YRIRPLELAD…EKNVQMGLYF (144 aa)). Residues S44, 92-95 (KFIR), and 104-106 (EDV) contribute to the substrate site. Acetyl-CoA is bound at residue 114-119 (GRGLGE). 135–136 (YK) serves as a coordination point for substrate. Acetyl-CoA is bound at residue 149 to 151 (YAK).

This sequence belongs to the acetyltransferase family. GNA1 subfamily. As to quaternary structure, homodimer. Highly expressed in the root elongation zone and at lower levels in leaves and grains.

The protein resides in the endoplasmic reticulum membrane. The enzyme catalyses D-glucosamine 6-phosphate + acetyl-CoA = N-acetyl-D-glucosamine 6-phosphate + CoA + H(+). It participates in nucleotide-sugar biosynthesis; UDP-N-acetyl-alpha-D-glucosamine biosynthesis; N-acetyl-alpha-D-glucosamine 1-phosphate from alpha-D-glucosamine 6-phosphate (route I): step 1/2. Its function is as follows. Acetyltransferase involved in de novo biosynthesis of UDP-N-acetylglucosamine (UDP-GlcNAc) in roots and is required for maintaining normal root cell shape. UDP-GlcNAc is an essential metabolite that serves as an initial sugar donor for N-glycan synthesis and thus plays an important role in protein and lipid glycosylation. The sequence is that of Glucosamine 6-phosphate N-acetyltransferase 1 (GNA1) from Oryza sativa subsp. japonica (Rice).